We begin with the raw amino-acid sequence, 757 residues long: Kin of IRRE-like protein 1 (757 aa).

The signal sequence occupies residues 1-16 (MLSLLVWILTLSDTFS). At 17–499 (QGTQTRFSQE…REVLPVGIIA (483 aa)) the chain is on the extracellular side. Ig-like C2-type domains are found at residues 21–115 (TRFS…AKLT), 120–216 (PEDT…TSIE), 223–299 (PTVT…TNVS), 308–387 (PRIV…EVPL), and 392–488 (PPII…IQLE). A disulfide bridge links cysteine 42 with cysteine 100. N-linked (GlcNAc...) asparagine glycosylation is found at asparagine 46 and asparagine 140. 2 disulfide bridges follow: cysteine 143–cysteine 200 and cysteine 244–cysteine 287. A glycan (N-linked (GlcNAc...) asparagine) is linked at asparagine 297. An intrachain disulfide couples cysteine 329 to cysteine 371. The Cell attachment site motif lies at 405–407 (RGD). A disulfide bond links cysteine 413 and cysteine 472. An N-linked (GlcNAc...) asparagine glycan is attached at asparagine 471. Residues 500-520 (GATIGASILLIFFFIALVFFL) traverse the membrane as a helical segment. The Cytoplasmic portion of the chain corresponds to 521–757 (YRRRKGSRKD…RFQQRMQTHV (237 aa)). Phosphoserine is present on serine 574. Phosphotyrosine; by FYN is present on residues tyrosine 605 and tyrosine 606. Tyrosine 622 and tyrosine 625 each carry phosphotyrosine. Residues 649-679 (QLNTYSRGPASDYGPEPTPPGPAAPAGTDTT) form a disordered region. Tyrosine 724 carries the post-translational modification Phosphotyrosine.

This sequence belongs to the immunoglobulin superfamily. In terms of assembly, interacts with TJP1/ZO-1 and with NPHS2/podocin (via the C-terminus). Interacts with NPHS1/nephrin (via the Ig-like domains); this interaction is dependent on KIRREL1 glycosylation. Homodimer (via the Ig-like domains). Interacts when tyrosine-phosphorylated with GRB2. Post-translationally, phosphorylation probably regulates the interaction with NSH2. Phosphorylated at Tyr-605 and Tyr-606 by FYN, leading to GRB2 binding. N-glycosylated. Abundantly expressed in kidney. Specifically expressed in podocytes of kidney glomeruli.

It localises to the cell membrane. Required for proper function of the glomerular filtration barrier. It is involved in the maintenance of a stable podocyte architecture with interdigitating foot processes connected by specialized cell-cell junctions, known as the slit diaphragm. It is a signaling protein that needs the presence of TEC kinases to fully trans-activate the transcription factor AP-1. The protein is Kin of IRRE-like protein 1 of Homo sapiens (Human).